Consider the following 426-residue polypeptide: Phosphomethylpyrimidine synthase (426 aa).

Substrate-binding positions include N65, M94, Y123, H162, 184 to 186, 225 to 228, and E264; these read SRG and DGMR. Zn(2+) is bound at residue H268. Residue Y291 participates in substrate binding. H332 provides a ligand contact to Zn(2+). 3 residues coordinate [4Fe-4S] cluster: C408, C411, and C415.

Belongs to the ThiC family. [4Fe-4S] cluster serves as cofactor.

The enzyme catalyses 5-amino-1-(5-phospho-beta-D-ribosyl)imidazole + S-adenosyl-L-methionine = 4-amino-2-methyl-5-(phosphooxymethyl)pyrimidine + CO + 5'-deoxyadenosine + formate + L-methionine + 3 H(+). The protein operates within cofactor biosynthesis; thiamine diphosphate biosynthesis. Its function is as follows. Catalyzes the synthesis of the hydroxymethylpyrimidine phosphate (HMP-P) moiety of thiamine from aminoimidazole ribotide (AIR) in a radical S-adenosyl-L-methionine (SAM)-dependent reaction. This Methanococcus maripaludis (strain C5 / ATCC BAA-1333) protein is Phosphomethylpyrimidine synthase.